A 390-amino-acid chain; its full sequence is Homeobox protein Hox-B2a (390 aa).

Disordered stretches follow at residues 40–73 (STAI…TASN), 81–100 (TAPP…GAPL), 108–155 (KEKK…LDNV), and 211–338 (MKHK…SLPD). Residues 52-73 (PSLSPCTGNQARPRSQKRTASN) show a composition bias toward polar residues. Residues 103 to 108 (EFPWMK) carry the Antp-type hexapeptide motif. Residues 118–135 (KPGATAAAAAASPSQASS) are compositionally biased toward low complexity. Residues 158-217 (SRRLRTAYTNTQLLELEKEFHFNKYLCRPRRVEIAALLDLTERQVKVWFQNRRMKHKRQT) constitute a DNA-binding region (homeobox). Over residues 244 to 262 (SSQSLEVSGSGSAAPSESE) the composition is skewed to low complexity. Positions 263–290 (TCPTTAAYTNSSDKSQPTPEEGQASQPE) are enriched in polar residues.

It belongs to the Antp homeobox family. Proboscipedia subfamily.

The protein localises to the nucleus. Its function is as follows. Sequence-specific transcription factor which is part of a developmental regulatory system that provides cells with specific positional identities on the anterior-posterior axis. Plays an important role in the patterning of hindbrain and pharyngeal arches. This chain is Homeobox protein Hox-B2a (hoxb2a), found in Danio rerio (Zebrafish).